The sequence spans 331 residues: MINTSIPLVDLHRHLDGNVRVNTIWELGHQHGIALPADSLETLAPFVQIQGKETSLVAFLKKLDWMVAVLADLDAVKRVAYENVADAALSGLDYAELRFSPYYMAMNHKLPIEGVVEAVIDGVKAGLKDYQVKINLIGIMSRSFGQAACAQELEGLLAHKQHLVAMDLAGDELGFPGELFNEHFKRVRDAGLAITAHAGEAAGSQSMWQAIQELGATRIGHGVNAIHDPKLMDYLAKHRIGIESCPTSNLHTSTVSSYAEHPFRTFMDAGVLISLNTDDPGVSAIDIKHEYRIAKSELGLSYAELAQVQRNGVEMAFLSESERKALYAAKA.

His12 and His14 together coordinate Zn(2+). 3 residues coordinate substrate: His14, Asp16, and Gly170. Residue His197 coordinates Zn(2+). Catalysis depends on Glu200, which acts as the Proton donor. Zn(2+) is bound at residue Asp278. A substrate-binding site is contributed by Asp279.

This sequence belongs to the metallo-dependent hydrolases superfamily. Adenosine and AMP deaminases family. Adenosine deaminase subfamily. Zn(2+) serves as cofactor.

It carries out the reaction adenosine + H2O + H(+) = inosine + NH4(+). It catalyses the reaction 2'-deoxyadenosine + H2O + H(+) = 2'-deoxyinosine + NH4(+). Catalyzes the hydrolytic deamination of adenosine and 2-deoxyadenosine. The polypeptide is Adenosine deaminase (Shewanella sp. (strain MR-7)).